Here is a 148-residue protein sequence, read N- to C-terminus: Deoxyuridine 5'-triphosphate nucleotidohydrolase (148 aa).

Substrate-binding positions include 67 to 69 (RSG), asparagine 80, 84 to 86 (TID), and lysine 94.

It belongs to the dUTPase family. It depends on Mg(2+) as a cofactor.

The catalysed reaction is dUTP + H2O = dUMP + diphosphate + H(+). Its pathway is pyrimidine metabolism; dUMP biosynthesis; dUMP from dCTP (dUTP route): step 2/2. In terms of biological role, this enzyme is involved in nucleotide metabolism: it produces dUMP, the immediate precursor of thymidine nucleotides and it decreases the intracellular concentration of dUTP so that uracil cannot be incorporated into DNA. In Orientia tsutsugamushi (strain Ikeda) (Rickettsia tsutsugamushi), this protein is Deoxyuridine 5'-triphosphate nucleotidohydrolase.